A 252-amino-acid polypeptide reads, in one-letter code: Imidazole glycerol phosphate synthase subunit HisF (252 aa).

Residues aspartate 13 and aspartate 132 contribute to the active site.

Belongs to the HisA/HisF family. In terms of assembly, heterodimer of HisH and HisF.

The protein resides in the cytoplasm. The enzyme catalyses 5-[(5-phospho-1-deoxy-D-ribulos-1-ylimino)methylamino]-1-(5-phospho-beta-D-ribosyl)imidazole-4-carboxamide + L-glutamine = D-erythro-1-(imidazol-4-yl)glycerol 3-phosphate + 5-amino-1-(5-phospho-beta-D-ribosyl)imidazole-4-carboxamide + L-glutamate + H(+). The protein operates within amino-acid biosynthesis; L-histidine biosynthesis; L-histidine from 5-phospho-alpha-D-ribose 1-diphosphate: step 5/9. In terms of biological role, IGPS catalyzes the conversion of PRFAR and glutamine to IGP, AICAR and glutamate. The HisF subunit catalyzes the cyclization activity that produces IGP and AICAR from PRFAR using the ammonia provided by the HisH subunit. In Campylobacter curvus (strain 525.92), this protein is Imidazole glycerol phosphate synthase subunit HisF.